We begin with the raw amino-acid sequence, 324 residues long: Granaticin polyketide synthase bifunctional cyclase/dehydratase (324 aa).

The segment at 1 to 21 is disordered; sequence MVQPAATPVSLPSPTVHRSEH.

Its pathway is antibiotic biosynthesis; granaticin biosynthesis. Is needed for correct cyclization of the oligoketide leading to isochromanequinone formation. This chain is Granaticin polyketide synthase bifunctional cyclase/dehydratase (gra-orf4), found in Streptomyces violaceoruber.